A 288-amino-acid polypeptide reads, in one-letter code: Centromere protein P (288 aa).

A coiled-coil region spans residues 1–71 (MDAELAEVRA…HLESELSFLS (71 aa)). S38 carries the post-translational modification Phosphoserine.

Belongs to the CENP-P/CTF19 family. As to quaternary structure, component of the CENPA-CAD complex, composed of CENPI, CENPK, CENPL, CENPO, CENPP, CENPQ, CENPR and CENPS. The CENPA-CAD complex interacts with the CENPA-NAC complex, at least composed of CENPA, CENPC, CENPH, CENPM, CENPN, CENPT and CENPU.

It is found in the nucleus. The protein resides in the chromosome. Its subcellular location is the centromere. Component of the CENPA-CAD (nucleosome distal) complex, a complex recruited to centromeres which is involved in assembly of kinetochore proteins, mitotic progression and chromosome segregation. May be involved in incorporation of newly synthesized CENPA into centromeres via its interaction with the CENPA-NAC complex. In Homo sapiens (Human), this protein is Centromere protein P (CENPP).